A 173-amino-acid chain; its full sequence is Thaumatin-like protein PWIR2 (173 aa).

A signal peptide spans 1 to 20 (MATSPVLFLLLAVFAAGASA).

It belongs to the thaumatin family.

The sequence is that of Thaumatin-like protein PWIR2 from Triticum aestivum (Wheat).